The chain runs to 2570 residues: Highly reducing polyketide synthase tstA (2570 aa).

The Ketosynthase family 3 (KS3) domain occupies 16 to 443 (AMPIAVVGIG…GANAHVVLEN (428 aa)). Catalysis depends on for beta-ketoacyl synthase activity residues Cys-191, His-326, and His-366. The disordered stretch occupies residues 458–478 (HTRKSATESSGTSTPSNPGPH). Residues 464–478 (TESSGTSTPSNPGPH) show a composition bias toward low complexity. One can recognise a Malonyl-CoA:ACP transacylase (MAT) domain in the interval 567-898 (FVFTGQGAQW…YSALVRNKNA (332 aa)). Residues 965–1103 (TDLLGVLERN…GLVSVVAPQK (139 aa)) are N-terminal hotdog fold. Residues 965–1293 (TDLLGVLERN…CATLAREGAD (329 aa)) form the PKS/mFAS DH domain. The active-site Proton acceptor; for dehydratase activity is the His-997. The tract at residues 1133-1293 (RRNINVPQFY…CATLAREGAD (161 aa)) is C-terminal hotdog fold. The Proton donor; for dehydratase activity role is filled by Asp-1198. The segment at 1343–1645 (LERAAYYMLK…IATSINSNNY (303 aa)) is methyltransferase (CMeT) domain. The region spanning 1866-2178 (GLLDSIFWTD…TGGHMGKLVG (313 aa)) is the Enoyl reductase (ER) domain. A Ketoreductase (KR) domain is found at 2202-2379 (ASYVLIGGLG…ATTIDLGAIS (178 aa)). The Carrier domain maps to 2482 to 2559 (DASELILGAL…HLATKIAQRS (78 aa)). Position 2519 is an O-(pantetheine 4'-phosphoryl)serine (Ser-2519).

Pantetheine 4'-phosphate serves as cofactor.

It participates in secondary metabolite biosynthesis. Its function is as follows. Highly reducing polyketide synthase; part of the gene cluster that mediates the biosynthesis of the antihypercholesterolemic agents phomoidrides which are dimeric anhydrides. The pathway begins with the highly reducing polyketide synthase tstA that catalyzes the formation of a C12-fatty acyl-ACP, starting from one acetate and 5 malonate units. The hydrolase tstM is involved in the release of the C12-fatty acyl chain from tstA. The alkylcitrate synthase (ACS) tstJ and the alkylcitrate dehydratase (ACDH) tstI then give rise to decarboxylated monomeric anhydrides by coupling the C12-fatty acyl chain with oxalacetic acid. The cyclase tstC is responsible for the dimerization of the monomeric anhydrides which leads to the production of prephomoidride that contains the characteristic bicyclo[4.3.1]deca-1,6-diene system of phomoidrides. Iterative oxidation catalyzed by the alpha-ketoglutarate-dependent dioxygenase tstK produced then phomoidride A. Finally, the methyltransferase tstE converts phomoidride A to phomoidride B via an acetalization reaction. The phosphatidylethanolamine-binding protein tstB and tstN are not essential for dimerization and their functions have still to be determined. This is Highly reducing polyketide synthase tstA from Talaromyces stipitatus (strain ATCC 10500 / CBS 375.48 / QM 6759 / NRRL 1006) (Penicillium stipitatum).